The sequence spans 201 residues: NADH-quinone oxidoreductase subunit B 1 (201 aa).

[4Fe-4S] cluster-binding residues include cysteine 80, cysteine 81, cysteine 145, and cysteine 175.

This sequence belongs to the complex I 20 kDa subunit family. In terms of assembly, NDH-1 is composed of 14 different subunits. Subunits NuoB, C, D, E, F, and G constitute the peripheral sector of the complex. The cofactor is [4Fe-4S] cluster.

The protein resides in the cell inner membrane. The enzyme catalyses a quinone + NADH + 5 H(+)(in) = a quinol + NAD(+) + 4 H(+)(out). NDH-1 shuttles electrons from NADH, via FMN and iron-sulfur (Fe-S) centers, to quinones in the respiratory chain. The immediate electron acceptor for the enzyme in this species is believed to be ubiquinone. Couples the redox reaction to proton translocation (for every two electrons transferred, four hydrogen ions are translocated across the cytoplasmic membrane), and thus conserves the redox energy in a proton gradient. The chain is NADH-quinone oxidoreductase subunit B 1 from Rhodopseudomonas palustris (strain BisB18).